A 338-amino-acid polypeptide reads, in one-letter code: tRNA(Ile)-lysidine synthase (338 aa).

Position 23–28 (23–28) interacts with ATP; sequence SGGLDS.

The protein belongs to the tRNA(Ile)-lysidine synthase family.

It localises to the cytoplasm. It carries out the reaction cytidine(34) in tRNA(Ile2) + L-lysine + ATP = lysidine(34) in tRNA(Ile2) + AMP + diphosphate + H(+). Its function is as follows. Ligates lysine onto the cytidine present at position 34 of the AUA codon-specific tRNA(Ile) that contains the anticodon CAU, in an ATP-dependent manner. Cytidine is converted to lysidine, thus changing the amino acid specificity of the tRNA from methionine to isoleucine. The protein is tRNA(Ile)-lysidine synthase of Helicobacter pylori (strain J99 / ATCC 700824) (Campylobacter pylori J99).